The sequence spans 117 residues: Hydrogenase maturation factor HypA (117 aa).

H2 is a binding site for Ni(2+). Residues C73, C76, C89, and C92 each contribute to the Zn(2+) site.

Belongs to the HypA/HybF family.

Its function is as follows. Involved in the maturation of [NiFe] hydrogenases. Required for nickel insertion into the metal center of the hydrogenase. This is Hydrogenase maturation factor HypA from Chlorobium luteolum (strain DSM 273 / BCRC 81028 / 2530) (Pelodictyon luteolum).